A 364-amino-acid polypeptide reads, in one-letter code: Mannose-1-phosphate guanyltransferase (364 aa).

This sequence belongs to the transferase hexapeptide repeat family.

The protein localises to the cytoplasm. The enzyme catalyses alpha-D-mannose 1-phosphate + GTP + H(+) = GDP-alpha-D-mannose + diphosphate. The protein operates within nucleotide-sugar biosynthesis; GDP-alpha-D-mannose biosynthesis; GDP-alpha-D-mannose from alpha-D-mannose 1-phosphate (GTP route): step 1/1. Its function is as follows. Involved in cell wall synthesis where it is required for glycosylation. Involved in cell cycle progression through cell-size checkpoint. This is Mannose-1-phosphate guanyltransferase (mpg1) from Emericella nidulans (strain FGSC A4 / ATCC 38163 / CBS 112.46 / NRRL 194 / M139) (Aspergillus nidulans).